Reading from the N-terminus, the 160-residue chain is ATP synthase subunit b (160 aa).

Residues 12–32 (ISFVLFVWFCMKYVWYPFISI) traverse the membrane as a helical segment.

It belongs to the ATPase B chain family. In terms of assembly, F-type ATPases have 2 components, F(1) - the catalytic core - and F(0) - the membrane proton channel. F(1) has five subunits: alpha(3), beta(3), gamma(1), delta(1), epsilon(1). F(0) has three main subunits: a(1), b(2) and c(10-14). The alpha and beta chains form an alternating ring which encloses part of the gamma chain. F(1) is attached to F(0) by a central stalk formed by the gamma and epsilon chains, while a peripheral stalk is formed by the delta and b chains.

The protein resides in the cell inner membrane. F(1)F(0) ATP synthase produces ATP from ADP in the presence of a proton or sodium gradient. F-type ATPases consist of two structural domains, F(1) containing the extramembraneous catalytic core and F(0) containing the membrane proton channel, linked together by a central stalk and a peripheral stalk. During catalysis, ATP synthesis in the catalytic domain of F(1) is coupled via a rotary mechanism of the central stalk subunits to proton translocation. Functionally, component of the F(0) channel, it forms part of the peripheral stalk, linking F(1) to F(0). This chain is ATP synthase subunit b, found in Blochmanniella pennsylvanica (strain BPEN).